We begin with the raw amino-acid sequence, 593 residues long: UvrABC system protein C (593 aa).

Residues 17 to 94 enclose the GIY-YIG domain; sequence MEPGCYLMKD…IKQYQPRYNI (78 aa). A UVR domain is found at 199-234; the sequence is KTILKSLEERMLTASESLDFERAKEYRDLIQHIQNL.

The protein belongs to the UvrC family. As to quaternary structure, interacts with UvrB in an incision complex.

The protein localises to the cytoplasm. The UvrABC repair system catalyzes the recognition and processing of DNA lesions. UvrC both incises the 5' and 3' sides of the lesion. The N-terminal half is responsible for the 3' incision and the C-terminal half is responsible for the 5' incision. This is UvrABC system protein C from Staphylococcus aureus (strain MSSA476).